The sequence spans 156 residues: Small ribosomal subunit protein uS7 (156 aa).

The protein belongs to the universal ribosomal protein uS7 family. Part of the 30S ribosomal subunit. Contacts proteins S9 and S11.

Its function is as follows. One of the primary rRNA binding proteins, it binds directly to 16S rRNA where it nucleates assembly of the head domain of the 30S subunit. Is located at the subunit interface close to the decoding center, probably blocks exit of the E-site tRNA. The sequence is that of Small ribosomal subunit protein uS7 from Shewanella woodyi (strain ATCC 51908 / MS32).